The sequence spans 204 residues: Per os infectivity factor 3 (204 aa).

As to quaternary structure, forms the PIF complex together with PIF1 and PIF2. The complex also interacts with per os infectivity factor PIF0.

Per os factor that plays a role in the initiation of host midgut infection. Unlike PIF1 and PIF2, PIF3 is not involved in specific binding of occluded virions (ODV) to the host midgut target cells. This Lepidoptera (butterflies and moths) protein is Per os infectivity factor 3 (AC115).